A 336-amino-acid chain; its full sequence is L-rhamnono-gamma-lactonase (336 aa).

It belongs to the metallo-dependent hydrolases superfamily. A divalent metal cation is required as a cofactor.

The catalysed reaction is L-rhamnono-1,4-lactone + H2O = L-rhamnonate + H(+). With respect to regulation, inhibited by Zn(2+), Fe(2+) and Cu(2+), but not by EDTA. Functionally, hydrolase with high substrate specificity for L-rhamnono-1,4-lactone. Catalyzes the second step in an alternative pathway for rhamnose utilization that does not involve phosphorylated intermediates. The polypeptide is L-rhamnono-gamma-lactonase (LRA2) (Scheffersomyces stipitis (strain ATCC 58785 / CBS 6054 / NBRC 10063 / NRRL Y-11545) (Yeast)).